The following is a 338-amino-acid chain: DNA-directed RNA polymerase subunit alpha (338 aa).

The segment at Met-1–Asn-226 is alpha N-terminal domain (alpha-NTD). The tract at residues Leu-243–Tyr-338 is alpha C-terminal domain (alpha-CTD).

This sequence belongs to the RNA polymerase alpha chain family. As to quaternary structure, homodimer. The RNAP catalytic core consists of 2 alpha, 1 beta, 1 beta' and 1 omega subunit. When a sigma factor is associated with the core the holoenzyme is formed, which can initiate transcription.

It catalyses the reaction RNA(n) + a ribonucleoside 5'-triphosphate = RNA(n+1) + diphosphate. Functionally, DNA-dependent RNA polymerase catalyzes the transcription of DNA into RNA using the four ribonucleoside triphosphates as substrates. In Streptomyces avermitilis (strain ATCC 31267 / DSM 46492 / JCM 5070 / NBRC 14893 / NCIMB 12804 / NRRL 8165 / MA-4680), this protein is DNA-directed RNA polymerase subunit alpha.